The chain runs to 5121 residues: Hydrocephalus-inducing protein homolog (5121 aa).

The tract at residues E363 to G754 is interaction with KIF9. Positions L956–A967 are enriched in basic residues. 7 disordered regions span residues L956–F987, L1925–S1951, S2155–G2186, E2333–T2459, L2482–E2534, T2664–M2684, and K3852–T3874. Positions E1908 to D1933 form a coiled coil. Polar residues predominate over residues S1936 to S1951. Positions A2267–K2365 form a coiled coil. Basic and acidic residues-rich tracts occupy residues E2333–K2360, V2393–N2418, D2444–L2453, E2489–R2498, and K2509–E2534. Positions G2504–E2549 form a coiled coil. Polar residues-rich tracts occupy residues T2664 to G2679 and G3857 to T3874.

Interacts with KIF9.

The protein resides in the cell projection. It is found in the cilium. Its subcellular location is the cytoplasm. The protein localises to the cytoskeleton. It localises to the cilium axoneme. The protein resides in the flagellum. Required for ciliary motility. The polypeptide is Hydrocephalus-inducing protein homolog (HYDIN) (Homo sapiens (Human)).